Reading from the N-terminus, the 339-residue chain is Uracil nucleotide/cysteinyl leukotriene receptor (339 aa).

The Extracellular segment spans residues 1–36 (MDGLETALPSLTDNASLAYSEQCGQETPLENMLFAC). The N-linked (GlcNAc...) asparagine glycan is linked to asparagine 14. A helical transmembrane segment spans residues 37–57 (FYLLDFILAFVGNALALWLFI). The Cytoplasmic portion of the chain corresponds to 58–64 (WDHKSGT). The helical transmembrane segment at 65–85 (PANVFLMHLAVADLSCVLVLP) threads the bilayer. Residues 86 to 105 (TRLVYHFSGNHWPFGEIPCR) lie on the Extracellular side of the membrane. Cysteine 104 and cysteine 181 form a disulfide bridge. Residues 106 to 126 (LTGFLFYLNMYASIYFLTCIS) form a helical membrane-spanning segment. The Cytoplasmic portion of the chain corresponds to 127-147 (ADRFLAIVHPVKSLKLRRPLY). Residues 148–168 (AHLACAFLWIVVAVAMAPLLV) traverse the membrane as a helical segment. Residues 169–195 (SPQTVQTNHTVVCLQLYREKASHHALA) lie on the Extracellular side of the membrane. The N-linked (GlcNAc...) asparagine glycan is linked to asparagine 176. Residues 196-216 (SLAVAFTFPFITTVTCYLLII) form a helical membrane-spanning segment. Over 217–232 (RSLRQGPRIEKHLKNK) the chain is Cytoplasmic. The helical transmembrane segment at 233–253 (AVRMIAMVLAIFLICFVPYHI) threads the bilayer. Over 254–280 (HRSVYVLHYRGGGTSCSAQRALALGNR) the chain is Extracellular. Residues 281–301 (ITSCLTSLNGALDPVMYFFVA) traverse the membrane as a helical segment. The Cytoplasmic portion of the chain corresponds to 302–339 (EKFRHALCNLLCSKRLTGPPPSFEGKTNESSLSARSEL).

The protein belongs to the G-protein coupled receptor 1 family. Expressed in brain, kidney, and heart. Highest level in brain.

The protein localises to the cell membrane. Dual specificity receptor for uracil nucleotides and cysteinyl leukotrienes (CysLTs). Signals through G(i) and inhibition of adenylyl cyclase. May mediate brain damage by nucleotides and CysLTs following ischemia. The chain is Uracil nucleotide/cysteinyl leukotriene receptor from Rattus norvegicus (Rat).